The sequence spans 240 residues: Probable septum site-determining protein MinC (240 aa).

This sequence belongs to the MinC family. In terms of assembly, interacts with MinD and FtsZ.

Functionally, cell division inhibitor that blocks the formation of polar Z ring septums. Rapidly oscillates between the poles of the cell to destabilize FtsZ filaments that have formed before they mature into polar Z rings. Prevents FtsZ polymerization. This is Probable septum site-determining protein MinC from Acinetobacter baylyi (strain ATCC 33305 / BD413 / ADP1).